The chain runs to 315 residues: tRNA uridine(34) hydroxylase (315 aa).

A Rhodanese domain is found at 136 to 230; that stretch reads SDPETLVIDT…YLEEIPPEES (95 aa). Cys190 serves as the catalytic Cysteine persulfide intermediate.

It belongs to the TrhO family.

It catalyses the reaction uridine(34) in tRNA + AH2 + O2 = 5-hydroxyuridine(34) in tRNA + A + H2O. Functionally, catalyzes oxygen-dependent 5-hydroxyuridine (ho5U) modification at position 34 in tRNAs. The chain is tRNA uridine(34) hydroxylase from Sinorhizobium medicae (strain WSM419) (Ensifer medicae).